Here is a 529-residue protein sequence, read N- to C-terminus: UDP-glucuronosyltransferase 2B28 (529 aa).

The N-terminal stretch at 1-24 (MALKWTSVLLLIHLGCYFSSGSCG) is a signal peptide. Lysine 135 is subject to N6-succinyllysine. Residue asparagine 315 is glycosylated (N-linked (GlcNAc...) asparagine). A helical transmembrane segment spans residues 495–517 (GFLLACVATVIFVVTKFCLFCFW).

Belongs to the UDP-glycosyltransferase family. Expressed in the liver, breast and kidney.

The protein resides in the endoplasmic reticulum membrane. The protein localises to the cytoplasm. It localises to the perinuclear region. It carries out the reaction glucuronate acceptor + UDP-alpha-D-glucuronate = acceptor beta-D-glucuronoside + UDP + H(+). Its function is as follows. UDP-glucuronosyltransferase (UGT) that catalyzes phase II biotransformation reactions in which lipophilic substrates are conjugated with glucuronic acid to increase the metabolite's water solubility, thereby facilitating excretion into either the urine or bile. Essential for the elimination and detoxification of drugs, xenobiotics and endogenous compounds. Catalyzes the glucuronidation of endogenous steroid hormones such as androgens (androsterone, 3alpha-androstanediol) and estrogens (estradiol, estrone). Catalyzes the glucuronidation of bile acid substrates, which are natural detergents for dietary lipids absorption. Displays glucuronidation activity toward the phenolic compounds eugenol. Functionally, lack UDP-glucuronosyltransferase (UGT) activity. In Homo sapiens (Human), this protein is UDP-glucuronosyltransferase 2B28.